The primary structure comprises 201 residues: dTTP/UTP pyrophosphatase (201 aa).

Catalysis depends on aspartate 75, which acts as the Proton acceptor.

It belongs to the Maf family. YhdE subfamily. It depends on a divalent metal cation as a cofactor.

The protein resides in the cytoplasm. It carries out the reaction dTTP + H2O = dTMP + diphosphate + H(+). It catalyses the reaction UTP + H2O = UMP + diphosphate + H(+). In terms of biological role, nucleoside triphosphate pyrophosphatase that hydrolyzes dTTP and UTP. May have a dual role in cell division arrest and in preventing the incorporation of modified nucleotides into cellular nucleic acids. The sequence is that of dTTP/UTP pyrophosphatase from Pseudomonas fluorescens (strain ATCC BAA-477 / NRRL B-23932 / Pf-5).